The primary structure comprises 456 residues: tRNA modification GTPase MnmE (456 aa).

Positions 24, 81, and 120 each coordinate (6S)-5-formyl-5,6,7,8-tetrahydrofolate. In terms of domain architecture, TrmE-type G spans 216–379 (GMTVVIAGRP…LRDHLKACMG (164 aa)). Position 226 (Asn226) interacts with K(+). Residues 226–231 (NAGKSS), 245–251 (TDIAGTT), 270–273 (DTAG), 335–338 (NKAD), and 359–361 (SAR) contribute to the GTP site. Ser230 provides a ligand contact to Mg(2+). K(+)-binding residues include Thr245, Ile247, and Thr250. Thr251 is a Mg(2+) binding site. Position 456 (Lys456) interacts with (6S)-5-formyl-5,6,7,8-tetrahydrofolate.

Belongs to the TRAFAC class TrmE-Era-EngA-EngB-Septin-like GTPase superfamily. TrmE GTPase family. As to quaternary structure, homodimer. Heterotetramer of two MnmE and two MnmG subunits. K(+) serves as cofactor.

Its subcellular location is the cytoplasm. In terms of biological role, exhibits a very high intrinsic GTPase hydrolysis rate. Involved in the addition of a carboxymethylaminomethyl (cmnm) group at the wobble position (U34) of certain tRNAs, forming tRNA-cmnm(5)s(2)U34. This chain is tRNA modification GTPase MnmE, found in Pseudomonas entomophila (strain L48).